Reading from the N-terminus, the 344-residue chain is DNA-directed RNA polymerase subunit alpha (344 aa).

The alpha N-terminal domain (alpha-NTD) stretch occupies residues 1 to 239; it reads MADHWNKLTR…DQLQSFISFD (239 aa). The alpha C-terminal domain (alpha-CTD) stretch occupies residues 254–344; sequence VLPYDHNLLR…ENLSKQYSED (91 aa).

This sequence belongs to the RNA polymerase alpha chain family. Homodimer. The RNAP catalytic core consists of 2 alpha, 1 beta, 1 beta' and 1 omega subunit. When a sigma factor is associated with the core the holoenzyme is formed, which can initiate transcription.

The catalysed reaction is RNA(n) + a ribonucleoside 5'-triphosphate = RNA(n+1) + diphosphate. Its function is as follows. DNA-dependent RNA polymerase catalyzes the transcription of DNA into RNA using the four ribonucleoside triphosphates as substrates. This Anaplasma phagocytophilum (strain HZ) protein is DNA-directed RNA polymerase subunit alpha.